The sequence spans 117 residues: Ig heavy chain V region 108A (117 aa).

The first 19 residues, 1–19 (MGWSWIFLFLLSGTAGVHS), serve as a signal peptide directing secretion. The 98-residue stretch at 20-117 (EVQLQQSGPE…EDSAVYYCAR (98 aa)) folds into the Ig-like domain.

This is Ig heavy chain V region 108A (Igh-VJ558) from Mus musculus (Mouse).